Reading from the N-terminus, the 449-residue chain is 23S rRNA (uracil(1939)-C(5))-methyltransferase RlmD (449 aa).

The 66-residue stretch at 1-66 (MGRSRHHNKL…AKFDEAKVVE (66 aa)) folds into the TRAM domain. [4Fe-4S] cluster-binding residues include cysteine 79, cysteine 85, cysteine 88, and cysteine 169. 6 residues coordinate S-adenosyl-L-methionine: glutamine 280, phenylalanine 309, asparagine 314, glutamate 330, asparagine 357, and aspartate 379. Cysteine 405 functions as the Nucleophile in the catalytic mechanism.

Belongs to the class I-like SAM-binding methyltransferase superfamily. RNA M5U methyltransferase family. RlmD subfamily.

The enzyme catalyses uridine(1939) in 23S rRNA + S-adenosyl-L-methionine = 5-methyluridine(1939) in 23S rRNA + S-adenosyl-L-homocysteine + H(+). Catalyzes the formation of 5-methyl-uridine at position 1939 (m5U1939) in 23S rRNA. The chain is 23S rRNA (uracil(1939)-C(5))-methyltransferase RlmD from Francisella tularensis subsp. novicida (strain U112).